The following is a 647-amino-acid chain: DNA topoisomerase 4 subunit B (647 aa).

ATP contacts are provided by residues Tyr11, Asn51, Asp78, 118–124 (GLHGVGS), and Lys344. A compositionally biased stretch (basic and acidic residues) spans 391-401 (AARKARDESRN). Residues 391–421 (AARKARDESRNGKKNKKDKGLLSGKLTPAQS) are disordered. The region spanning 427 to 541 (NELYLVEGDS…AGHVYIALPP (115 aa)) is the Toprim domain. Positions 433, 506, and 508 each coordinate Mg(2+).

Belongs to the type II topoisomerase family. ParE type 2 subfamily. In terms of assembly, heterotetramer composed of ParC and ParE. Mg(2+) is required as a cofactor. Requires Mn(2+) as cofactor. The cofactor is Ca(2+).

The enzyme catalyses ATP-dependent breakage, passage and rejoining of double-stranded DNA.. With respect to regulation, inhibited by quinolones, such as levofloxacin. Topoisomerase IV is essential for chromosome segregation. It relaxes supercoiled DNA. Performs the decatenation events required during the replication of a circular DNA molecule. The chain is DNA topoisomerase 4 subunit B from Streptococcus pneumoniae serotype 4 (strain ATCC BAA-334 / TIGR4).